A 377-amino-acid polypeptide reads, in one-letter code: DNA replication and repair protein RecF (377 aa).

30-37 (GNNGSGKS) is a binding site for ATP.

Belongs to the RecF family.

The protein resides in the cytoplasm. Its function is as follows. The RecF protein is involved in DNA metabolism; it is required for DNA replication and normal SOS inducibility. RecF binds preferentially to single-stranded, linear DNA. It also seems to bind ATP. The chain is DNA replication and repair protein RecF from Colwellia psychrerythraea (strain 34H / ATCC BAA-681) (Vibrio psychroerythus).